A 247-amino-acid polypeptide reads, in one-letter code: Putative 2-succinyl-6-hydroxy-2,4-cyclohexadiene-1-carboxylate synthase (247 aa).

The 226-residue stretch at 4 to 229 (IIFLHGLLGT…CAGHNSHLEN (226 aa)) folds into the AB hydrolase-1 domain.

Belongs to the AB hydrolase superfamily. MenH family. As to quaternary structure, monomer.

The enzyme catalyses 5-enolpyruvoyl-6-hydroxy-2-succinyl-cyclohex-3-ene-1-carboxylate = (1R,6R)-6-hydroxy-2-succinyl-cyclohexa-2,4-diene-1-carboxylate + pyruvate. The protein operates within quinol/quinone metabolism; 1,4-dihydroxy-2-naphthoate biosynthesis; 1,4-dihydroxy-2-naphthoate from chorismate: step 3/7. It functions in the pathway quinol/quinone metabolism; menaquinone biosynthesis. Functionally, catalyzes a proton abstraction reaction that results in 2,5-elimination of pyruvate from 2-succinyl-5-enolpyruvyl-6-hydroxy-3-cyclohexene-1-carboxylate (SEPHCHC) and the formation of 2-succinyl-6-hydroxy-2,4-cyclohexadiene-1-carboxylate (SHCHC). The chain is Putative 2-succinyl-6-hydroxy-2,4-cyclohexadiene-1-carboxylate synthase from Haemophilus influenzae (strain ATCC 51907 / DSM 11121 / KW20 / Rd).